Here is a 212-residue protein sequence, read N- to C-terminus: Troponin I, cardiac muscle (212 aa).

Residues 1–11 (MADRSGGSTAG) show a composition bias toward polar residues. The interval 1–45 (MADRSGGSTAGDTVPAPPPVRRRSSANYRAYATEPHAKKKSKISA) is disordered. An N-acetylalanine modification is found at Ala2. Ser5 is subject to Phosphoserine. A phosphoserine; by PKA and PKD/PRKD1 mark is found at Ser24 and Ser25. Residue Tyr28 is modified to Phosphotyrosine. The residue at position 33 (Thr33) is a Phosphothreonine; by STK4/MST1. The tract at residues 34-81 (EPHAKKKSKISASRKLQLKTLMLQIAKQELEREAEERRGEKGRALSTR) is involved in binding TNC. Residues Ser44 and Ser46 each carry the phosphoserine; by PKC/PRKCE modification. Phosphothreonine; by STK4/MST1 is present on Thr53. Ser79 is subject to Phosphoserine. Thr80 carries the post-translational modification Phosphothreonine. Positions 131–151 (NQKIFDLRGKFKRPTLRRVRI) are involved in binding TNC and actin. Thr145 bears the Phosphothreonine; by STK4/MST1 mark. A Phosphoserine; by PAK3 modification is found at Ser152. Thr183 carries the post-translational modification Phosphothreonine. Position 201 is a phosphoserine (Ser201).

The protein belongs to the troponin I family. In terms of assembly, interacts with TRIM63. Binds to actin and tropomyosin. Interacts with STK4/MST1. Post-translationally, phosphorylated at Ser-24 and Ser-25 by PRKD1; phosphorylation reduces myofilament calcium sensitivity. Phosphorylated preferentially at Thr-33. Phosphorylation by STK4/MST1 alters its binding affinity to TNNC1 (cardiac Tn-C) and TNNT2 (cardiac Tn-T). Phosphorylated at Ser-44 and Ser-46 by PRKCE; phosphorylation increases myocardium contractile dysfunction.

In terms of biological role, troponin I is the inhibitory subunit of troponin, the thin filament regulatory complex which confers calcium-sensitivity to striated muscle actomyosin ATPase activity. This chain is Troponin I, cardiac muscle (TNNI3), found in Bos taurus (Bovine).